Consider the following 515-residue polypeptide: ATP synthase subunit alpha (515 aa).

Residue 171–178 (GDRQTGKT) participates in ATP binding.

Belongs to the ATPase alpha/beta chains family. As to quaternary structure, F-type ATPases have 2 components, CF(1) - the catalytic core - and CF(0) - the membrane proton channel. CF(1) has five subunits: alpha(3), beta(3), gamma(1), delta(1), epsilon(1). CF(0) has three main subunits: a(1), b(2) and c(9-12). The alpha and beta chains form an alternating ring which encloses part of the gamma chain. CF(1) is attached to CF(0) by a central stalk formed by the gamma and epsilon chains, while a peripheral stalk is formed by the delta and b chains.

The protein resides in the cell inner membrane. It carries out the reaction ATP + H2O + 4 H(+)(in) = ADP + phosphate + 5 H(+)(out). Functionally, produces ATP from ADP in the presence of a proton gradient across the membrane. The alpha chain is a regulatory subunit. This Xylella fastidiosa (strain M12) protein is ATP synthase subunit alpha.